An 83-amino-acid chain; its full sequence is Small ribosomal subunit protein bS18 (83 aa).

It belongs to the bacterial ribosomal protein bS18 family. In terms of assembly, part of the 30S ribosomal subunit. Forms a tight heterodimer with protein bS6.

Binds as a heterodimer with protein bS6 to the central domain of the 16S rRNA, where it helps stabilize the platform of the 30S subunit. The sequence is that of Small ribosomal subunit protein bS18 from Methylobacterium radiotolerans (strain ATCC 27329 / DSM 1819 / JCM 2831 / NBRC 15690 / NCIMB 10815 / 0-1).